The chain runs to 642 residues: Threonine--tRNA ligase (642 aa).

Positions 1-61 (MPVITLPDGS…ETDAELSIIT (61 aa)) constitute a TGS domain. Residues 243-534 (DHRKIGKQLD…LIEEYAGRFP (292 aa)) are catalytic. Zn(2+)-binding residues include Cys-334, His-385, and His-511.

The protein belongs to the class-II aminoacyl-tRNA synthetase family. In terms of assembly, homodimer. Zn(2+) serves as cofactor.

The protein resides in the cytoplasm. It carries out the reaction tRNA(Thr) + L-threonine + ATP = L-threonyl-tRNA(Thr) + AMP + diphosphate + H(+). Its function is as follows. Catalyzes the attachment of threonine to tRNA(Thr) in a two-step reaction: L-threonine is first activated by ATP to form Thr-AMP and then transferred to the acceptor end of tRNA(Thr). Also edits incorrectly charged L-seryl-tRNA(Thr). The polypeptide is Threonine--tRNA ligase (Shewanella sp. (strain ANA-3)).